We begin with the raw amino-acid sequence, 401 residues long: MASPTLALAQSPPPKSPAVSVSQRNPHCWSKLPLDLMQLVFERLAFLDFERAKSVCSSWQFGSKQSKPNNQIPWMILFPTDKNYCLLFNPEDKEKLYKTQHLGDDFAKSIVLATYRSWLLMQPRYEELEDQTLDQEFHLYIKDLLTCERINLPAFESDIFGLSHPILWIDDKTKDYLVIGTINRETMVSFKNGDNSWKKFPELPKSSCTDMCLNMIYKDHKLHYLDYSNLYIYDFFGEFPREAFRISVREFVGYATNPYGYDEFPEVPLKLKLNRYIYNMIVTVRGDVLIVASLHFSMAETWEFIICKMDSSKVNKWEEIVSLGDESILLGLGITVLAKDMEGITCNSIYFTADDFYEDYEENEIFIYNLDTNKVEIPHQFVSSSIPSAHARWFLPTFKRD.

The interval 1–23 (MASPTLALAQSPPPKSPAVSVSQ) is disordered. The F-box domain maps to 27–74 (HCWSKLPLDLMQLVFERLAFLDFERAKSVCSSWQFGSKQSKPNNQIPW).

The sequence is that of F-box protein At1g69090 from Arabidopsis thaliana (Mouse-ear cress).